We begin with the raw amino-acid sequence, 685 residues long: Threonine--tRNA ligase (685 aa).

The interval 1–28 is disordered; sequence MTSPAPEHSAAPLRVPAGTTAGTAVREA. The 65-residue stretch at 1 to 65 folds into the TGS domain; it reads MTSPAPEHSA…EVDVDVEPVA (65 aa). The interval 262–568 is catalytic; sequence DHRKLGTELD…LTEHYAGAFP (307 aa). Residues cysteine 367, histidine 418, and histidine 545 each contribute to the Zn(2+) site.

Belongs to the class-II aminoacyl-tRNA synthetase family. As to quaternary structure, homodimer. Zn(2+) is required as a cofactor.

The protein localises to the cytoplasm. The catalysed reaction is tRNA(Thr) + L-threonine + ATP = L-threonyl-tRNA(Thr) + AMP + diphosphate + H(+). Functionally, catalyzes the attachment of threonine to tRNA(Thr) in a two-step reaction: L-threonine is first activated by ATP to form Thr-AMP and then transferred to the acceptor end of tRNA(Thr). Also edits incorrectly charged L-seryl-tRNA(Thr). This chain is Threonine--tRNA ligase, found in Rhodococcus erythropolis (strain PR4 / NBRC 100887).